A 319-amino-acid chain; its full sequence is Coproporphyrin III ferrochelatase (319 aa).

2 residues coordinate Fe(2+): histidine 193 and glutamate 274.

Belongs to the ferrochelatase family.

The protein resides in the cytoplasm. It carries out the reaction Fe-coproporphyrin III + 2 H(+) = coproporphyrin III + Fe(2+). The protein operates within porphyrin-containing compound metabolism; protoheme biosynthesis. In terms of biological role, involved in coproporphyrin-dependent heme b biosynthesis. Catalyzes the insertion of ferrous iron into coproporphyrin III to form Fe-coproporphyrin III. This chain is Coproporphyrin III ferrochelatase, found in Streptococcus mutans serotype c (strain ATCC 700610 / UA159).